Consider the following 589-residue polypeptide: Coiled-coil domain-containing protein 22 homolog (589 aa).

Coiled-coil stretches lie at residues 287-426 (KTPL…LQTK) and 523-589 (CEEL…TSRQ). A disordered region spans residues 568-589 (EMQNESQRLEESIRRMEVTSRQ). The segment covering 574 to 589 (QRLEESIRRMEVTSRQ) has biased composition (basic and acidic residues).

Belongs to the CCDC22 family.

The chain is Coiled-coil domain-containing protein 22 homolog from Aedes aegypti (Yellowfever mosquito).